A 691-amino-acid chain; its full sequence is DNA ligase (691 aa).

NAD(+) contacts are provided by residues 41-45, 90-91, and glutamate 130; these read DAEYD and SL. Lysine 132 (N6-AMP-lysine intermediate) is an active-site residue. NAD(+) contacts are provided by arginine 153, glutamate 190, lysine 307, and lysine 331. Positions 425, 428, 443, and 449 each coordinate Zn(2+). One can recognise a BRCT domain in the interval 610–691; it reads APQGVLAGKT…LHQLLEGNTP (82 aa).

The protein belongs to the NAD-dependent DNA ligase family. LigA subfamily. Requires Mg(2+) as cofactor. Mn(2+) serves as cofactor.

It catalyses the reaction NAD(+) + (deoxyribonucleotide)n-3'-hydroxyl + 5'-phospho-(deoxyribonucleotide)m = (deoxyribonucleotide)n+m + AMP + beta-nicotinamide D-nucleotide.. In terms of biological role, DNA ligase that catalyzes the formation of phosphodiester linkages between 5'-phosphoryl and 3'-hydroxyl groups in double-stranded DNA using NAD as a coenzyme and as the energy source for the reaction. It is essential for DNA replication and repair of damaged DNA. In Burkholderia cenocepacia (strain ATCC BAA-245 / DSM 16553 / LMG 16656 / NCTC 13227 / J2315 / CF5610) (Burkholderia cepacia (strain J2315)), this protein is DNA ligase.